Reading from the N-terminus, the 248-residue chain is Superoxide dismutase [Mn] 1 (248 aa).

The N-terminal stretch at 1-41 (MQTTFRRILILFVGLLVPLFFACQSNSQVDAAPSAAPQLSA) is a signal peptide. Residues H68, H123, D208, and H212 each contribute to the Mn(2+) site.

It belongs to the iron/manganese superoxide dismutase family. In terms of assembly, homodimer. Mn(2+) serves as cofactor.

The enzyme catalyses 2 superoxide + 2 H(+) = H2O2 + O2. Its function is as follows. Destroys superoxide anion radicals which are normally produced within the cells and which are toxic to biological systems. In Leptolyngbya boryana (Plectonema boryanum), this protein is Superoxide dismutase [Mn] 1 (sodA1).